The primary structure comprises 55 residues: MVYRRRRRSSTGTTYGSTRRRRSSGYRRRPGRPRTYRRSRSRSSTGRRSYRTRYY.

A disordered region spans residues 1 to 55 (MVYRRRRRSSTGTTYGSTRRRRSSGYRRRPGRPRTYRRSRSRSSTGRRSYRTRYY). 2 consecutive repeat copies span residues 5–10 (RRRRSS) and 19–24 (RRRRSS). Positions 5 to 24 (RRRRSSTGTTYGSTRRRRSS) are 2 X 6 AA repeats of R-R-R-R-S-S. The segment covering 18–41 (TRRRRSSGYRRRPGRPRTYRRSRS) has biased composition (basic residues).

In terms of assembly, interacts with protein AC132. Post-translationally, phosphorylated.

It localises to the virion. It is found in the host cytoplasm. Functionally, plays a role in viral DNA packaging and nucleocapsid assembly. Promotes viral gene transcription during the late stage of infection while it is non-essential for the basal level of viral gene transcription. The protein is DNA-binding protein (P6.9) of Lepidoptera (butterflies and moths).